A 417-amino-acid chain; its full sequence is UDP-N-acetylmuramoylalanine--D-glutamate ligase (417 aa).

101-107 (GTAGKTS) serves as a coordination point for ATP.

This sequence belongs to the MurCDEF family.

It is found in the cytoplasm. It catalyses the reaction UDP-N-acetyl-alpha-D-muramoyl-L-alanine + D-glutamate + ATP = UDP-N-acetyl-alpha-D-muramoyl-L-alanyl-D-glutamate + ADP + phosphate + H(+). Its pathway is cell wall biogenesis; peptidoglycan biosynthesis. Its function is as follows. Cell wall formation. Catalyzes the addition of glutamate to the nucleotide precursor UDP-N-acetylmuramoyl-L-alanine (UMA). The polypeptide is UDP-N-acetylmuramoylalanine--D-glutamate ligase (Thermus thermophilus (strain ATCC BAA-163 / DSM 7039 / HB27)).